We begin with the raw amino-acid sequence, 444 residues long: Methylenetetrahydrofolate--tRNA-(uracil-5-)-methyltransferase TrmFO (444 aa).

An FAD-binding site is contributed by 10-15 (GAGLAG).

The protein belongs to the MnmG family. TrmFO subfamily. FAD serves as cofactor.

The protein localises to the cytoplasm. It catalyses the reaction uridine(54) in tRNA + (6R)-5,10-methylene-5,6,7,8-tetrahydrofolate + NADH + H(+) = 5-methyluridine(54) in tRNA + (6S)-5,6,7,8-tetrahydrofolate + NAD(+). The enzyme catalyses uridine(54) in tRNA + (6R)-5,10-methylene-5,6,7,8-tetrahydrofolate + NADPH + H(+) = 5-methyluridine(54) in tRNA + (6S)-5,6,7,8-tetrahydrofolate + NADP(+). Catalyzes the folate-dependent formation of 5-methyl-uridine at position 54 (M-5-U54) in all tRNAs. The chain is Methylenetetrahydrofolate--tRNA-(uracil-5-)-methyltransferase TrmFO from Streptococcus pneumoniae (strain 70585).